The chain runs to 303 residues: Sulfotransferase 6B1 (303 aa).

Lys-65–Trp-70 is a binding site for 3'-phosphoadenylyl sulfate. The Proton acceptor role is filled by His-118. 3'-phosphoadenylyl sulfate contacts are provided by residues Arg-140, Ser-148, Tyr-203, Ser-237–Met-242, and Arg-259–Gly-261.

It belongs to the sulfotransferase 1 family. As to expression, specifically expressed in kidney and testis.

Its subcellular location is the cytoplasm. It is found in the cytosol. The catalysed reaction is thyroxine + 3'-phosphoadenylyl sulfate = thyroxine sulfate + adenosine 3',5'-bisphosphate + H(+). Sulfotransferase that utilizes 3'-phospho-5'-adenylyl sulfate (PAPS) as sulfonate donor to catalyze the sulfate conjugation of thyroxine. Involved in the metabolism of thyroxine. This chain is Sulfotransferase 6B1 (SULT6B1), found in Homo sapiens (Human).